A 573-amino-acid polypeptide reads, in one-letter code: Glutathione/L-cysteine transport system ATP-binding/permease protein CydC (573 aa).

The Cytoplasmic segment spans residues 1-15; it reads MRALLPYLALYKRHK. 2 helical membrane-spanning segments follow: residues 16–36 and 37–57; these read WMLS…IGLL and TLSG…LYSF. The ABC transmembrane type-1 domain maps to 20-306; it reads LGIVLAIVTL…VTGAFQHLGQ (287 aa). Residues 58 to 136 lie on the Cytoplasmic side of the membrane; that stretch reads NYMLPAAGVR…VDTLDHLYLR (79 aa). The helical transmembrane segment at 137-157 threads the bilayer; the sequence is VISPLVGAFVVIMVVTIGLSF. Over 158-161 the chain is Periplasmic; that stretch reads LDFT. The chain crosses the membrane as a helical span at residues 162-182; the sequence is LAFTLGGIMLLTLFLMPPLFY. Residues 183 to 249 lie on the Cytoplasmic side of the membrane; it reads RAGKSTGQNL…QSELTALSQA (67 aa). Residues 250–270 traverse the membrane as a helical segment; sequence IMLLIGALAVILMLWMASGGV. Topologically, residues 271 to 276 are periplasmic; that stretch reads GGNAQP. Residues 277 to 297 traverse the membrane as a helical segment; sequence GALIALFVFCALAAFEALAPV. At 298 to 573 the chain is on the cytoplasmic side; sequence TGAFQHLGQV…GRYYQFKQGL (276 aa). Residues 339-572 enclose the ABC transporter domain; that stretch reads LTLRDVQFTY…QGRYYQFKQG (234 aa). 373 to 380 contributes to the ATP binding site; that stretch reads GRTGCGKS.

This sequence belongs to the ABC transporter superfamily. Cysteine exporter (TC 3.A.1.129.1) family. Forms a heterodimer with CydD.

The protein resides in the cell inner membrane. The catalysed reaction is L-cysteine(in) + ATP + H2O = L-cysteine(out) + ADP + phosphate + H(+). The enzyme catalyses glutathione(in) + ATP + H2O = glutathione(out) + ADP + phosphate + H(+). Its activity is regulated as follows. ATPase activity is stimulated by various thiol compounds. The presence of heme leads to a further enhancement of thiol-stimulated ATPase activity, although a large excess of heme inhibits activity. Glutathione transport is inhibited by sodium orthovanadate, an inhibitor of ABC-type transport systems, but not by the proton ionophore carbonyl cyanide m-chlorophenylhydrazone (CCCP). Part of the ABC transporter complex CydDC that exports the reduced low-molecular-weight thiols cysteine and glutathione to the periplasm. Export of these thiol-containing redox-active molecules may be crucial for redox homeostasis in the periplasm, permitting correct assembly of various respiratory complexes and formation of correct disulfide bonds in periplasmic and secreted proteins. CydC contains transmembrane domains (TMD), which form a pore in the inner membrane, and an ATP-binding domain (NBD), which is responsible for energy generation. Required for the assembly of functional cytochrome bd-type quinol oxidases and periplasmic c-type cytochromes. Overexpression of CydDC under anaerobic conditions also results in the formation of a heme biosynthesis-derived pigment, P-574. CydDC binds heme b, but heme is probably not transported by the complex and instead has a role in regulating ATPase activity. Its function is as follows. Conversely, a more recent study suggests an alternative function of CydDC: authors suggest that CydDC does not mediate the export of L-cysteine but rather reduces cytoplasmic L-cystine to L-cysteine. The principle function of CydDC would be to maintain the reduced state of cytoplasmic L-cysteine, thereby providing an important connection between sulfur metabolism, oxidative stress and resistance to antibiotics. The polypeptide is Glutathione/L-cysteine transport system ATP-binding/permease protein CydC (Escherichia coli (strain K12)).